The sequence spans 869 residues: Dynamin-3 (869 aa).

The 267-residue stretch at 28-294 folds into the Dynamin-type G domain; sequence LLELPQIAVV…LTNHIRDTLP (267 aa). Residues 38-45 are G1 motif; sequence GGQSAGKS. Residue 38–46 participates in GTP binding; sequence GGQSAGKSS. Residues 64-66 are G2 motif; it reads VTR. The G3 motif stretch occupies residues 136-139; that stretch reads DLPG. The G4 motif stretch occupies residues 205-208; that stretch reads TKLD. Residue 205 to 211 coordinates GTP; it reads TKLDLMD. Y231 bears the Phosphotyrosine mark. Positions 235-238 are G5 motif; that stretch reads VNRS. A GTP-binding site is contributed by 236–239; that stretch reads NRSQ. An N6-acetyllysine modification is found at K299. The region spanning 525–631 is the PH domain; sequence IVIRKGWLTV…WKASLLRAGV (107 aa). Y603 carries the phosphotyrosine modification. K604 is subject to N6-acetyllysine. The region spanning 659–750 is the GED domain; it reads VETIRNLVDS…IIGDINTVTV (92 aa). The segment at 752–869 is disordered; that stretch reads TPAPPPVDDS…IRPLESSLLD (118 aa). Phosphoserine occurs at positions 769 and 773. The span at 775 to 796 shows a compositional bias: low complexity; sequence TTQRRLTLSAPLPRPASSRGPA. 2 stretches are compositionally biased toward pro residues: residues 797-822 and 832-855; these read PAIP…PPFP and PQVP…PSPT. Phosphoserine is present on S853.

This sequence belongs to the TRAFAC class dynamin-like GTPase superfamily. Dynamin/Fzo/YdjA family. Isoform-specific expression in germ-cell-depleted testis (Sertoli cells), brain (peripheral sensory neurons), lung and heart.

It is found in the cytoplasm. The protein localises to the cytoskeleton. It localises to the cytoplasmic vesicle. Its subcellular location is the golgi apparatus. It carries out the reaction GTP + H2O = GDP + phosphate + H(+). In terms of biological role, microtubule-associated force-producing protein involved in producing microtubule bundles and able to bind and hydrolyze GTP. Most probably involved in vesicular trafficking processes, in particular endocytosis. The polypeptide is Dynamin-3 (Dnm3) (Rattus norvegicus (Rat)).